The primary structure comprises 408 residues: MKDVLERFLGYIKVDTQSSEESDTVPTTKTQLEFAKKLGEELKAIGLKDVSVDESGYVMATLESNIDKKVPAIGFIAHMDTSPDLSGTNINPRIVEKYDGQDIVLNKEKNIVLKINEFPEILEYKGQDIVVTDGNTLLGADDKAGIAEIITAMEYLINHPEIKHGTIKVGFTPDEEVGKGADHFDVKKFGADLAYTLDGGGIGELECETFNAAKAKVIIEGRNVHPGSAKNKMTNAVLVANKFINTLPENEVPERTEGYEGFFHLLSVKSEVETAELNYIIRDFDRKKFEERKEQIKEVGKKINEEYNKEIVCVKVEDQYYNMKEKIDEVKYVVDIAYDAMKAIDIEPILVPIRGGTDGSRLSFMGLPTPNLFAGGHNFHGRFEFVPVLSMEKAAELVVKIAELYANR.

Histidine 78 contacts Zn(2+). Residue aspartate 80 is part of the active site. Zn(2+) is bound at residue aspartate 141. Glutamate 175 (proton acceptor) is an active-site residue. Glutamate 176, aspartate 198, and histidine 380 together coordinate Zn(2+).

This sequence belongs to the peptidase M20B family. It depends on Zn(2+) as a cofactor.

Its subcellular location is the cytoplasm. The enzyme catalyses Release of the N-terminal residue from a tripeptide.. Functionally, cleaves the N-terminal amino acid of tripeptides. The chain is Peptidase T from Clostridium botulinum (strain Okra / Type B1).